The primary structure comprises 284 residues: Cytosolic Fe-S cluster assembly factor NUBP2 homolog (284 aa).

Residue 27–34 participates in ATP binding; the sequence is GKGGVGKS. The [4Fe-4S] cluster site is built by cysteine 200 and cysteine 203.

This sequence belongs to the Mrp/NBP35 ATP-binding proteins family. NUBP2/CFD1 subfamily. In terms of assembly, heterotetramer of 2 NUBP1 and 2 NUBP2 chains. [4Fe-4S] cluster is required as a cofactor.

It is found in the cytoplasm. In terms of biological role, component of the cytosolic iron-sulfur (Fe/S) protein assembly (CIA) machinery. Required for maturation of extramitochondrial Fe-S proteins. The NUBP1-NUBP2 heterotetramer forms a Fe-S scaffold complex, mediating the de novo assembly of an Fe-S cluster and its transfer to target apoproteins. The sequence is that of Cytosolic Fe-S cluster assembly factor NUBP2 homolog from Monosiga brevicollis (Choanoflagellate).